A 92-amino-acid polypeptide reads, in one-letter code: Ictacalcin (92 aa).

2 EF-hand domains span residues Ile12–Asn47 and Ser49–Leu84. Ca(2+)-binding residues include Thr27, Glu32, Asp62, Asn64, Asp66, and Glu73.

Belongs to the S-100 family. As to expression, abundant in epithelial cells of olfactory rosette, barbel, skin and gill but not brain or muscle.

Functionally, plays an important role in catfish calcium homeostasis. The protein is Ictacalcin of Ictalurus punctatus (Channel catfish).